Here is a 439-residue protein sequence, read N- to C-terminus: Chitinase-like protein Idgf1 (439 aa).

A signal peptide spans 1 to 20 (MRFQLFYILGLLSVTSLTHA). A GH18 domain is found at 22-439 (SNLICYYDSN…ILRSIKYFMG (418 aa)). C26 and C53 are joined by a disulfide. N122, N218, and N346 each carry an N-linked (GlcNAc...) asparagine glycan. A disulfide bridge links C340 with C423.

The protein belongs to the glycosyl hydrolase 18 family. IDGF subfamily. As to expression, primarily expressed in yolk cells and fat body. In larvae, it is expressed in large salivary gland cells and weakly expressed in imaginal disks. Less expressed than Idgf2 and Idgf4.

It localises to the secreted. Cooperates with insulin-like peptides to stimulate the proliferation, polarization and motility of imaginal disk cells. May act by stabilizing the binding of insulin-like peptides to its receptor through a simultaneous interaction with both molecules to form a multiprotein signaling complex. The protein is Chitinase-like protein Idgf1 (Idgf1) of Drosophila melanogaster (Fruit fly).